Consider the following 208-residue polypeptide: Thymidylate kinase (208 aa).

Residue 10 to 17 coordinates ATP; it reads GPDGSGKT.

Belongs to the thymidylate kinase family.

The catalysed reaction is dTMP + ATP = dTDP + ADP. In terms of biological role, phosphorylation of dTMP to form dTDP in both de novo and salvage pathways of dTTP synthesis. This is Thymidylate kinase from Listeria welshimeri serovar 6b (strain ATCC 35897 / DSM 20650 / CCUG 15529 / CIP 8149 / NCTC 11857 / SLCC 5334 / V8).